Reading from the N-terminus, the 553-residue chain is Zinc finger protein 426 (553 aa).

One can recognise a KRAB domain in the interval 40-111; sequence VSFDDVIVDF…KIVFPEWKIQ (72 aa). C2H2-type zinc fingers lie at residues 222-244, 277-299, 305-327, 333-355, 361-383, 389-411, 417-439, 445-467, 473-495, 501-525, and 531-553; these read FECS…QRTH, HRCK…MRTH, YECK…GRTH, YVCN…VRSH, YACK…IRTH, FVCV…LKMH, CECK…MRTH, YTCK…MRIH, YECK…ERTH, YECK…SHTH, and YKCQ…ERIH.

The protein resides in the nucleus. May be involved in transcriptional regulation. The polypeptide is Zinc finger protein 426 (Znf426) (Rattus norvegicus (Rat)).